Here is a 243-residue protein sequence, read N- to C-terminus: Protein GrpE (243 aa).

This sequence belongs to the GrpE family. In terms of assembly, homodimer.

The protein resides in the cytoplasm. Functionally, participates actively in the response to hyperosmotic and heat shock by preventing the aggregation of stress-denatured proteins, in association with DnaK and GrpE. It is the nucleotide exchange factor for DnaK and may function as a thermosensor. Unfolded proteins bind initially to DnaJ; upon interaction with the DnaJ-bound protein, DnaK hydrolyzes its bound ATP, resulting in the formation of a stable complex. GrpE releases ADP from DnaK; ATP binding to DnaK triggers the release of the substrate protein, thus completing the reaction cycle. Several rounds of ATP-dependent interactions between DnaJ, DnaK and GrpE are required for fully efficient folding. This chain is Protein GrpE, found in Mycoplasma mobile (strain ATCC 43663 / 163K / NCTC 11711) (Mesomycoplasma mobile).